A 296-amino-acid chain; its full sequence is uncharacterized protein (296 aa).

A chloroplast-targeting transit peptide spans 1–57; the sequence is MTSFLSFSAISAHPPTFSGASFRPRSFSPRLFKSCVKCTYAEAGLSSASWSAPIDIV.

This sequence belongs to the NAD(P)-dependent epimerase/dehydratase family.

Its subcellular location is the plastid. It localises to the chloroplast. The protein resides in the plastoglobule. This is an uncharacterized protein from Arabidopsis thaliana (Mouse-ear cress).